We begin with the raw amino-acid sequence, 504 residues long: Transcriptional coactivator YAP1 (504 aa).

2 stretches are compositionally biased toward pro residues: residues 1-12 and 20-36; these read MDPGQQPPPQPA and PSQPPQGQGPPSGPGQP. Positions 1–59 are disordered; sequence MDPGQQPPPQPAPQGQGQPPSQPPQGQGPPSGPGQPAPAATQAAPQAPPAGHQIVHVRG. Residues 37-51 are compositionally biased toward low complexity; that stretch reads APAATQAAPQAPPAG. Position 61 is a phosphoserine; by LATS1 and LATS2 (serine 61). Threonine 63 is modified (phosphothreonine). A coiled-coil region spans residues 86-100; it reads MRLRKLPDSFFKPPE. Lysine 90 is subject to N6-lactoyllysine. Residues 91 to 114 form a disordered region; that stretch reads LPDSFFKPPEPKSHSRQASTDAGT. The residue at position 105 (serine 105) is a Phosphoserine. Residue serine 109 is modified to Phosphoserine; by LATS1 and LATS2. Threonine 110 carries the phosphothreonine modification. At threonine 119 the chain carries Phosphothreonine; by MAPK8 and MAPK9. Residue serine 127 is modified to Phosphoserine; by LATS1 and LATS2. Phosphoserine occurs at positions 128 and 131. Residues 133 to 158 form a disordered region; sequence QLGAVSPGTLTPTGVVSGPAATPTAQ. Phosphoserine; by MAPK8 and MAPK9 is present on serine 138. The residue at position 154 (threonine 154) is a Phosphothreonine; by MAPK8 and MAPK9. The residue at position 164 (serine 164) is a Phosphoserine; by LATS1 and LATS2. 2 WW domains span residues 171–204 and 230–263; these read VPLPAGWEMAKTSSGQRYFLNHIDQTTTWQDPRK and GPLPDGWEQAMTQDGEIYYINHKNKTTSWLDPRL. Residues serine 274 and serine 289 each carry the phosphoserine modification. 2 disordered regions span residues 275–309 and 355–407; these read QSAPVKQPPPLAPQSPQGGVMGGSNSNQQQQMRLQ and LEQD…MSSY. Residues 291-504 form a transactivation domain region; the sequence is QGGVMGGSNS…LDKESFLTWL (214 aa). The stretch at 298–359 forms a coiled coil; the sequence is SNSNQQQQMR…SQLPTLEQDG (62 aa). Positions 355 to 391 are enriched in polar residues; the sequence is LEQDGGTQNPVSSPGMSQELRTMTTNSSDPFLNSGTY. Serine 367 bears the Phosphoserine; by MAPK8 and MAPK9 mark. 4 positions are modified to phosphoserine: serine 371, serine 381, serine 382, and serine 388. Serine 397 carries the post-translational modification Phosphoserine; by LATS1 and LATS2. Phosphoserine; by CK1 occurs at positions 400 and 403. The residue at position 407 (tyrosine 407) is a Phosphotyrosine; by ABL1. At threonine 412 the chain carries Phosphothreonine; by MAPK8 and MAPK9.

Belongs to the YAP1 family. In terms of assembly, part of a complex when phosphorylated that contains DSG3, PKP1, YAP1 and YWHAG; the complex is required for localization of DSG3 and YAP1 to the cell membrane in keratinocytes. Binds to the SH3 domain of the YES kinase. Binds to WBP1 and WBP2. Binds, in vitro, through the WW1 domain, to neural isoforms of ENAH that contain the PPSY motif. The phosphorylated form interacts with YWHAB. Interacts (via WW domains) with LATS1 (via PPxY motif 2). Interacts with LATS2. Interacts with TEAD1, TEAD2, TEAD3 and TEAD4. Interacts with TP73. Interacts with RUNX1. Interacts with HCK. Interacts (via WW domains) with PTPN14 (via PPxY motif 2); this interaction leads to the cytoplasmic sequestration of YAP1 and inhibits its transcriptional coactivator activity. Interacts (when phosphorylated at Ser-127) with SMAD2, SMAD3 and WWTR1. Interacts with PRRG2 (via cytoplasmic domain). Interacts (via WW domains) with PRRG4 (via cytoplasmic domain). Interacts (phosphorylated) with CLDN18; the interaction sequesters YAP1 away from the nucleus and thereby restricts transcription of YAP1 target genes. Interacts with SMAD1. Interacts with AMOTL2, the interaction is required for ubiquitination of AMOTL2 and localization of YAP1 to tight junctions. Interacts with AMOT isoform 1; the interaction facilitates translocation of YAP1 to the cytoplasm and tight junctions. Interacts (via WW domain 1) with isoform 3 of ERBB4 (via PPxY motif 2). In terms of processing, phosphorylated by LATS1 and LATS2; leading to cytoplasmic translocation and inactivation. Phosphorylated by ABL1; leading to YAP1 stabilization, enhanced interaction with TP73 and recruitment onto proapoptotic genes; in response to DNA damage. Phosphorylation at Ser-400 and Ser-403 by CK1 is triggered by previous phosphorylation at Ser-397 by LATS proteins and leads to YAP1 ubiquitination by SCF(beta-TRCP) E3 ubiquitin ligase and subsequent degradation. Phosphorylated at Thr-119, Ser-138, Thr-154, Ser-367 and Thr-412 by MAPK8/JNK1 and MAPK9/JNK2, which is required for the regulation of apoptosis by YAP1. Phosphorylated in the nucleus by PRP4K; phosphorylation leads to nuclear exclusion. Post-translationally, lactylation by AARS1 promotes nuclear localization and stabilization of YAP1, leading to increased Hippo signaling pathway. Delactylated by SIRT1. Ubiquitinated by SCF(beta-TRCP) E3 ubiquitin ligase. Increased expression seen in some liver and prostate cancers. Isoforms lacking the transactivation domain found in striatal neurons of patients with Huntington disease (at protein level).

The protein resides in the cytoplasm. It is found in the nucleus. Its subcellular location is the cell junction. The protein localises to the tight junction. It localises to the cell membrane. In terms of biological role, transcriptional regulator with dual roles as a coactivator and corepressor. Critical downstream regulatory target in the Hippo signaling pathway, crucial for organ size control and tumor suppression by restricting proliferation and promoting apoptosis. The Hippo signaling pathway core involves a kinase cascade featuring STK3/MST2 and STK4/MST1, along with its regulatory partner SAV1, which phosphorylates and activates LATS1/2 in complex with their regulatory protein, MOB1. This activation leads to the phosphorylation and inactivation of the YAP1 oncoprotein and WWTR1/TAZ. Phosphorylation of YAP1 by LATS1/2 prevents its nuclear translocation, thereby regulating the expression of its target genes. The transcriptional regulation of gene expression requires TEAD transcription factors and modulates cell growth, anchorage-independent growth, and induction of epithelial-mesenchymal transition (EMT). Plays a key role in tissue tension and 3D tissue shape by regulating the cortical actomyosin network, acting via ARHGAP18, a Rho GTPase activating protein that suppresses F-actin polymerization. It also suppresses ciliogenesis by acting as a transcriptional corepressor of TEAD4 target genes AURKA and PLK1. In conjunction with WWTR1, regulates TGFB1-dependent SMAD2 and SMAD3 nuclear accumulation. Synergizes with WBP2 to enhance PGR activity. Activates the C-terminal fragment (CTF) of ERBB4 (isoform 3). This chain is Transcriptional coactivator YAP1, found in Homo sapiens (Human).